A 155-amino-acid polypeptide reads, in one-letter code: Small ribosomal subunit protein uS7cz/uS7cy (155 aa).

The protein belongs to the universal ribosomal protein uS7 family. Part of the 30S ribosomal subunit.

The protein resides in the plastid. It is found in the chloroplast. In terms of biological role, one of the primary rRNA binding proteins, it binds directly to 16S rRNA where it nucleates assembly of the head domain of the 30S subunit. In Phalaenopsis aphrodite subsp. formosana (Moth orchid), this protein is Small ribosomal subunit protein uS7cz/uS7cy (rps7-A).